The primary structure comprises 119 residues: NADH-quinone oxidoreductase subunit A (119 aa).

The next 3 helical transmembrane spans lie at 7–27 (FPVLLFIVVGVGLGLALMTIG), 63–83 (LIAILFILFDLETAFLFPWGV), and 88–108 (IGWPGFFAMGVFLLEFLVGFV).

This sequence belongs to the complex I subunit 3 family. NDH-1 is composed of 14 different subunits. Subunits NuoA, H, J, K, L, M, N constitute the membrane sector of the complex.

The protein localises to the cell inner membrane. It carries out the reaction a quinone + NADH + 5 H(+)(in) = a quinol + NAD(+) + 4 H(+)(out). Functionally, NDH-1 shuttles electrons from NADH, via FMN and iron-sulfur (Fe-S) centers, to quinones in the respiratory chain. The immediate electron acceptor for the enzyme in this species is believed to be ubiquinone. Couples the redox reaction to proton translocation (for every two electrons transferred, four hydrogen ions are translocated across the cytoplasmic membrane), and thus conserves the redox energy in a proton gradient. The sequence is that of NADH-quinone oxidoreductase subunit A from Ralstonia pickettii (strain 12J).